Here is a 170-residue protein sequence, read N- to C-terminus: Mitochondrial fission 1 protein A (170 aa).

The stretch at Arg-90–Trp-123 is one TPR repeat. The helical transmembrane segment at Val-142–Ile-162 threads the bilayer.

The protein belongs to the FIS1 family. Interacts with ARC5.

Its subcellular location is the mitochondrion outer membrane. The protein resides in the peroxisome membrane. In terms of biological role, component of the peroxisomal and mitochondrial division machineries. Plays a role in promoting the fission of mitochondria and peroxisomes. This chain is Mitochondrial fission 1 protein A (FIS1A), found in Arabidopsis thaliana (Mouse-ear cress).